Reading from the N-terminus, the 276-residue chain is MALVKTKPTSPGRRSMVKVVNPDLHKGAPHAPLLEKQIQKSGRNNNGHITTRHKGGGHKHHYRVVDFKRNDKDGIPAKIERLEYDPNRSANIALVLFADGERRYIIAPKGAVVGQAIANGSEAPIKAGNNLPIRNIPVGTTIHCVEILPGKGAQVARSAGTSAVLLAREGIYAQVRLRSGEVRRVHIECRATIGEVGNEEHSLRQIGKAGATRWRGIRPTVRGVVMNPVDHPHGGGEGKTAAGRDPVSPWGTPTKGYRTRRNKRTDSMIVQRRHKR.

2 disordered regions span residues 37–59 (QIQK…GGHK) and 225–276 (VMNP…RHKR). Residues 39–49 (QKSGRNNNGHI) are compositionally biased toward polar residues. The segment covering 50 to 59 (TTRHKGGGHK) has biased composition (basic residues).

Belongs to the universal ribosomal protein uL2 family. Part of the 50S ribosomal subunit. Forms a bridge to the 30S subunit in the 70S ribosome.

One of the primary rRNA binding proteins. Required for association of the 30S and 50S subunits to form the 70S ribosome, for tRNA binding and peptide bond formation. It has been suggested to have peptidyltransferase activity; this is somewhat controversial. Makes several contacts with the 16S rRNA in the 70S ribosome. This Ralstonia pickettii (strain 12J) protein is Large ribosomal subunit protein uL2.